The chain runs to 388 residues: 8-amino-7-oxononanoate synthase (388 aa).

R23 provides a ligand contact to substrate. 110–111 provides a ligand contact to pyridoxal 5'-phosphate; that stretch reads GF. H135 contacts substrate. Pyridoxal 5'-phosphate contacts are provided by S181, H209, and T235. K238 carries the N6-(pyridoxal phosphate)lysine modification. Residue T352 participates in substrate binding.

The protein belongs to the class-II pyridoxal-phosphate-dependent aminotransferase family. BioF subfamily. Homodimer. Requires pyridoxal 5'-phosphate as cofactor.

It carries out the reaction 6-carboxyhexanoyl-[ACP] + L-alanine + H(+) = (8S)-8-amino-7-oxononanoate + holo-[ACP] + CO2. It participates in cofactor biosynthesis; biotin biosynthesis. In terms of biological role, catalyzes the decarboxylative condensation of pimeloyl-[acyl-carrier protein] and L-alanine to produce 8-amino-7-oxononanoate (AON), [acyl-carrier protein], and carbon dioxide. In Sodalis glossinidius (strain morsitans), this protein is 8-amino-7-oxononanoate synthase.